Here is a 122-residue protein sequence, read N- to C-terminus: Biogenesis of lysosome-related organelles complex 1 subunit CNL1 (122 aa).

Positions M1 to E10 are enriched in basic and acidic residues. Positions M1 to I21 are disordered. Residues E63 to I95 are a coiled coil.

Belongs to the BLOC1S4 family. In terms of assembly, component of the biogenesis of lysosome-related organelles complex-1 (BLOC-1) composed of at least BLI1, BLS1, CNL1, KXD1, SNN1 and VAB2.

The protein resides in the cytoplasm. Functionally, component of the biogenesis of lysosome-related organelles complex-1 (BLOC-1), a complex that is involved in endosomal cargo sorting. This Saccharomyces cerevisiae (strain ATCC 204508 / S288c) (Baker's yeast) protein is Biogenesis of lysosome-related organelles complex 1 subunit CNL1 (CNL1).